A 244-amino-acid chain; its full sequence is Venom nerve growth factor 1 (244 aa).

The signal sequence occupies residues 1-18; that stretch reads MSMLCYTLIIAFLIGIWA. Residues 19–125 constitute a propeptide that is removed on maturation; that stretch reads APKSEDNVPL…TLNRNIRAKR (107 aa). A compositionally biased stretch (basic and acidic residues) spans 47–66; sequence GLKTSRNTDQRHPAPKKAED. A disordered region spans residues 47–67; it reads GLKTSRNTDQRHPAPKKAEDQ. 3 cysteine pairs are disulfide-bonded: cysteine 139–cysteine 205, cysteine 181–cysteine 233, and cysteine 193–cysteine 235.

The protein belongs to the NGF-beta family. In terms of assembly, homodimer; non-covalently linked. As to expression, expressed by the venom gland.

Its subcellular location is the secreted. Functionally, nerve growth factor is important for the development and maintenance of the sympathetic and sensory nervous systems. It stimulates division and differentiation of sympathetic and embryonic sensory neurons as well as basal forebrain cholinergic neurons in the brain. Its relevance in the snake venom is not clear. However, it has been shown to inhibit metalloproteinase-dependent proteolysis of platelet glycoprotein Ib alpha, suggesting a metalloproteinase inhibition to prevent metalloprotease autodigestion and/or protection against prey proteases. Binds a lipid between the two protein chains in the homodimer. The lipid-bound form promotes histamine relase from mouse mast cells, contrary to the lipid-free form. This is Venom nerve growth factor 1 from Notechis scutatus scutatus (Mainland tiger snake).